A 53-amino-acid chain; its full sequence is MAVPKKRTSISKKIIRNTLWKKKGYFTALKAFSLAQSLFTGNSKSFFCNKYKR.

This sequence belongs to the bacterial ribosomal protein bL32 family.

The protein resides in the plastid. The protein localises to the chloroplast. The sequence is that of Large ribosomal subunit protein bL32c from Phaseolus vulgaris (Kidney bean).